Reading from the N-terminus, the 226-residue chain is Protein pdh1 (226 aa).

Positions M1 to G26 are cleaved as a signal peptide. Residues I27–T41 are Extracellular-facing. The chain crosses the membrane as a helical span at residues F42 to I62. Over T63 to S65 the chain is Cytoplasmic. Residues F66–V86 traverse the membrane as a helical segment. The Extracellular portion of the chain corresponds to E87–Y97. The chain crosses the membrane as a helical span at residues L98–I118. Residues A119–F191 lie on the Cytoplasmic side of the membrane. A helical transmembrane segment spans residues C192–V212. Residues Q213 to I226 lie on the Extracellular side of the membrane.

The protein localises to the membrane. The chain is Protein pdh1 (pdh1) from Schizosaccharomyces pombe (strain 972 / ATCC 24843) (Fission yeast).